A 248-amino-acid polypeptide reads, in one-letter code: tRNA1(Val) (adenine(37)-N6)-methyltransferase (248 aa).

This sequence belongs to the methyltransferase superfamily. tRNA (adenine-N(6)-)-methyltransferase family.

The protein localises to the cytoplasm. The catalysed reaction is adenosine(37) in tRNA1(Val) + S-adenosyl-L-methionine = N(6)-methyladenosine(37) in tRNA1(Val) + S-adenosyl-L-homocysteine + H(+). Functionally, specifically methylates the adenine in position 37 of tRNA(1)(Val) (anticodon cmo5UAC). The polypeptide is tRNA1(Val) (adenine(37)-N6)-methyltransferase (Pectobacterium carotovorum subsp. carotovorum (strain PC1)).